The chain runs to 141 residues: Large ribosomal subunit protein uL11 (141 aa).

It belongs to the universal ribosomal protein uL11 family. Part of the ribosomal stalk of the 50S ribosomal subunit. Interacts with L10 and the large rRNA to form the base of the stalk. L10 forms an elongated spine to which L12 dimers bind in a sequential fashion forming a multimeric L10(L12)X complex. Post-translationally, one or more lysine residues are methylated.

Its function is as follows. Forms part of the ribosomal stalk which helps the ribosome interact with GTP-bound translation factors. The protein is Large ribosomal subunit protein uL11 of Campylobacter fetus subsp. fetus (strain 82-40).